The chain runs to 307 residues: Myeloid-associated differentiation marker-like protein 2 (307 aa).

2 consecutive MARVEL domains span residues 17–154 (AVTS…ARPG) and 159–303 (YMAT…RIRF). The next 7 membrane-spanning stretches (helical) occupy residues 53-73 (FCMAAWGFCFAFSVLVVACEF), 90-110 (AFAMLATLLCATAAVIYPLYF), 129-149 (LAASVFAGLLFLAYAAEVALT), 163-183 (VSGLLKIVQAFVACIIFGALV), 198-218 (VAVYSLCFMATVAVVVLSVMG), 232-252 (IVYTFLAVLLYLSAAVIWPVF), and 278-298 (LVVAIFTYVNLLLYIVDLAYS).

It belongs to the MAL family.

The protein localises to the membrane. This Mus musculus (Mouse) protein is Myeloid-associated differentiation marker-like protein 2 (Myadml2).